A 292-amino-acid polypeptide reads, in one-letter code: Phosphatidylserine decarboxylase proenzyme (292 aa).

Catalysis depends on charge relay system; for autoendoproteolytic cleavage activity residues Asp-89, His-146, and Ser-252. The active-site Schiff-base intermediate with substrate; via pyruvic acid; for decarboxylase activity is the Ser-252. Ser-252 is subject to Pyruvic acid (Ser); by autocatalysis.

It belongs to the phosphatidylserine decarboxylase family. PSD-B subfamily. Prokaryotic type I sub-subfamily. Heterodimer of a large membrane-associated beta subunit and a small pyruvoyl-containing alpha subunit. Pyruvate is required as a cofactor. Is synthesized initially as an inactive proenzyme. Formation of the active enzyme involves a self-maturation process in which the active site pyruvoyl group is generated from an internal serine residue via an autocatalytic post-translational modification. Two non-identical subunits are generated from the proenzyme in this reaction, and the pyruvate is formed at the N-terminus of the alpha chain, which is derived from the carboxyl end of the proenzyme. The autoendoproteolytic cleavage occurs by a canonical serine protease mechanism, in which the side chain hydroxyl group of the serine supplies its oxygen atom to form the C-terminus of the beta chain, while the remainder of the serine residue undergoes an oxidative deamination to produce ammonia and the pyruvoyl prosthetic group on the alpha chain. During this reaction, the Ser that is part of the protease active site of the proenzyme becomes the pyruvoyl prosthetic group, which constitutes an essential element of the active site of the mature decarboxylase.

The protein localises to the cell membrane. It catalyses the reaction a 1,2-diacyl-sn-glycero-3-phospho-L-serine + H(+) = a 1,2-diacyl-sn-glycero-3-phosphoethanolamine + CO2. The protein operates within phospholipid metabolism; phosphatidylethanolamine biosynthesis; phosphatidylethanolamine from CDP-diacylglycerol: step 2/2. In terms of biological role, catalyzes the formation of phosphatidylethanolamine (PtdEtn) from phosphatidylserine (PtdSer). The protein is Phosphatidylserine decarboxylase proenzyme of Shewanella baltica (strain OS185).